A 995-amino-acid chain; its full sequence is UPF0182 protein MMAR_1371 (995 aa).

The next 7 helical transmembrane spans lie at 18–38 (VLILIALGVIALLLAGPRLID), 63–83 (FLVFLVAGVLVGGIVFAGLAL), 113–133 (LFGIGIPAAIGLLAGIVAQSY), 175–195 (FVAIFLAFVANVVSHYLFGGI), 210–230 (IQLVSLVGVLVLLKAVAYWLD), 259–279 (KLILMAIAVICAAAVFSAIVL), and 287–307 (IGLVLLLLSSLIVGAAWPMIV). The disordered stretch occupies residues 900–948 (AATGIQPTEGGAPANVPPNNAPSPEALPGTPPSPPTAVPPAPEASVTLS). Positions 928 to 941 (GTPPSPPTAVPPAP) are enriched in pro residues.

It belongs to the UPF0182 family.

It is found in the cell membrane. This chain is UPF0182 protein MMAR_1371, found in Mycobacterium marinum (strain ATCC BAA-535 / M).